We begin with the raw amino-acid sequence, 89 residues long: Small ribosomal subunit protein bS18 (89 aa).

Belongs to the bacterial ribosomal protein bS18 family. In terms of assembly, part of the 30S ribosomal subunit. Forms a tight heterodimer with protein bS6.

Binds as a heterodimer with protein bS6 to the central domain of the 16S rRNA, where it helps stabilize the platform of the 30S subunit. This chain is Small ribosomal subunit protein bS18, found in Parabacteroides distasonis (strain ATCC 8503 / DSM 20701 / CIP 104284 / JCM 5825 / NCTC 11152).